We begin with the raw amino-acid sequence, 481 residues long: Transcription factor TGA9 (481 aa).

The disordered stretch occupies residues Gln91–Arg181. Residues Ser97–Ser109 are compositionally biased toward low complexity. Residues Ala110–Ser126 are compositionally biased toward polar residues. Residues Ser143–Thr155 are compositionally biased toward low complexity. Residues Lys165 to Gly172 carry the Nuclear localization signal motif. In terms of domain architecture, bZIP spans Asp176–Arg220. The segment at Lys178–Lys198 is basic motif. A leucine-zipper region spans residues Leu204–Leu218. A DOG1 domain is found at Ala242–Arg450.

Belongs to the bZIP family. In terms of assembly, homodimer. Binds DNA as a dimer. Interacts with floral glutaredoxins GRXC7/ROXY1 and GRXC8/ROXY2 in the nucleus. Interacts with TGA1, TGA2, TGA3, TGA4, TGA5, TGA6, TGA7, TGA10 and PAN. In terms of tissue distribution, mostly expressed in stems, inflorescence apex and flowers, and, to a lower extent, in seedlings, leaves and siliques.

Its subcellular location is the nucleus. In terms of biological role, together with TGA10, basic leucine-zipper transcription factor required for anther development, probably via the activation of SPL expression in anthers and via the regulation of genes with functions in early and middle tapetal development. Required for signaling responses to pathogen-associated molecular patterns (PAMPs) such as flg22 that involves chloroplastic reactive oxygen species (ROS) production and subsequent expression of H(2)O(2)-responsive genes. This chain is Transcription factor TGA9, found in Arabidopsis thaliana (Mouse-ear cress).